The primary structure comprises 307 residues: N-acetylglucosaminyl-diphospho-decaprenol L-rhamnosyltransferase (307 aa).

The protein belongs to the glycosyltransferase 2 family. Mn(2+) is required as a cofactor. Mg(2+) serves as cofactor.

The enzyme catalyses N-acetyl-alpha-D-glucosaminyl-1-diphospho-trans,octa-cis-decaprenol + dTDP-beta-L-rhamnose = alpha-L-rhamnosyl-(1-&gt;3)-N-acetyl-alpha-D-glucosaminyl-diphospho-trans,octa-cis-decaprenol + dTDP + H(+). In terms of biological role, involved in the biosynthesis of the mycolylarabinogalactan-peptidoglycan (mAGP) complex, an essential component of the mycobacterial cell wall. Catalyzes the transfer of the rhamnosyl moiety from dTDP-rhamnosyl (dTDP-Rha) onto the decaprenyl-pyrophosphoryl-GlcNAc (C50-PP-GlcNAc), yielding rhamnosyl-decaprenyl-pyrophosphoryl-GlcNAc (Rha-C50-PP-GlcNAc). In Mycobacterium tuberculosis (strain CDC 1551 / Oshkosh), this protein is N-acetylglucosaminyl-diphospho-decaprenol L-rhamnosyltransferase (wbbL).